The following is a 191-amino-acid chain: CASP-like protein 4C3 (191 aa).

Residues 1–29 are Cytoplasmic-facing; it reads METGDSAVKSSQDVHYYGKSTAQKHRRSN. The chain crosses the membrane as a helical span at residues 30–50; sequence GIILIFRALTFSFSLTSVIVM. Topologically, residues 51-72 are extracellular; sequence GTNRHRIDAQSRVAWYDFDPFR. A helical membrane pass occupies residues 73–93; sequence YVLAVNAIICIYSFVEIWLAV. Residues 94–116 are Cytoplasmic-facing; that stretch reads YTYLKDTLFLPETFQVWFDYGHD. Residues 117–137 traverse the membrane as a helical segment; sequence QGFAYLLFSANSAGIAMAQLL. Topologically, residues 138-162 are extracellular; sequence QSGNSLIHGAYRCSDAGVFCTQARA. A helical transmembrane segment spans residues 163-183; sequence SIGLGFGAFLFLALSSLLTGL. The Cytoplasmic segment spans residues 184–191; that stretch reads RVARWYFS.

The protein belongs to the Casparian strip membrane proteins (CASP) family. In terms of assembly, homodimer and heterodimers.

The protein localises to the cell membrane. The polypeptide is CASP-like protein 4C3 (Physcomitrium patens (Spreading-leaved earth moss)).